We begin with the raw amino-acid sequence, 1173 residues long: Pumilio homolog 2 (1173 aa).

Disordered regions lie at residues 41–68, 265–296, 480–518, 592–662, and 730–759; these read VSSA…PLSG, VSKL…ASPT, QQAA…ESLA, LTGA…SLGF, and PISM…SSSL. The segment covering 287–296 has biased composition (polar residues); that stretch reads TPGSRQASPT. A compositionally biased stretch (low complexity) spans 480–492; sequence QQAATQASQGQQQ. A compositionally biased stretch (polar residues) spans 493–518; the sequence is VMRATSNQRPLTPNQAQQGQQPESLA. Residues 606-622 are compositionally biased toward low complexity; that stretch reads QQQQQQQQQQHQQQQQQ. The segment covering 623–633 has biased composition (polar residues); the sequence is PNANLHSNSFY. Over residues 634 to 657 the composition is skewed to low complexity; it reads GNSTMSNNSQSSSLFSPGPGQPGS. A PUM-HD domain is found at 815–1155; it reads GRSRLLEDFR…HILAKLEKYY (341 aa). 9 Pumilio repeats span residues 835-870, 871-906, 907-942, 943-978, 979-1014, 1015-1050, 1051-1086, 1087-1129, and 1130-1167; these read DLMG…LVFS, EILQ…ALAT, RIRG…EMVR, ELDG…FIIE, AFKG…PILE, ELHQ…KIVC, EVRG…FLID, EICC…IIMH, and KIRP…LLVG. An adenine-nucleotide binding in RNA target region spans residues 850-854; that stretch reads SRFIQ. Residues 886–890 form a uracil-nucleotide binding in RNA target region; that stretch reads NYVIQ. Residues 922–926 are adenine-nucleotide binding in RNA target; sequence CRVIQ. Residues 958–962 form a non-specific-nucleotide binding in RNA target region; sequence NHVVQ. Residues 994–998 form an adenine-nucleotide binding in RNA target region; that stretch reads CRVIQ. The tract at residues 1030–1034 is uracil-nucleotide binding in RNA target; it reads NYVIQ. Residues 1066–1070 are guanine-nucleotide binding in RNA target; that stretch reads SNVVE. The uracil-nucleotide binding in RNA target stretch occupies residues 1109–1113; it reads NYVVQ.

Component of a complex with papd4, sympk, tacc3, parn, dazl and cpeb1. Phosphorylated.

The protein resides in the cytoplasm. It is found in the P-body. Its subcellular location is the cytoplasmic granule. Sequence-specific RNA-binding protein that acts as a post-transcriptional repressor by binding the 3'-UTR of mRNA targets. Binds to an RNA consensus sequence, the Pumilio Response Element (PRE), 5'-UGUANAUA-3', that is related to the Nanos Response Element (NRE). Mediates post-transcriptional repression of transcripts via different mechanisms: acts via direct recruitment of deadenylase complexes leading to translational inhibition and mRNA degradation. Also mediates deadenylation-independent repression by promoting accessibility of miRNAs. This chain is Pumilio homolog 2 (pum2), found in Xenopus laevis (African clawed frog).